We begin with the raw amino-acid sequence, 341 residues long: Eukaryotic translation initiation factor 2 subunit 1 (341 aa).

The S1 motif domain occupies Asn-18–Arg-89. A disordered region spans residues Leu-301–Lys-341. Residues Glu-303–Glu-330 show a composition bias toward acidic residues. The span at Glu-331–Lys-341 shows a compositional bias: basic and acidic residues.

The protein belongs to the eIF-2-alpha family. Eukaryotic translation initiation factor 2 eIF2 is a heterotrimeric complex composed of an alpha, a beta and a gamma subunit.

The protein localises to the cytoplasm. The protein resides in the cytosol. Functionally, eIF-2 functions in the early steps of protein synthesis by forming a ternary complex with GTP and initiator tRNA. This complex binds to a 40S ribosomal subunit, followed by mRNA binding to form a 43S pre-initiation complex. Junction of the 60S ribosomal subunit to form the 80S initiation complex is preceded by hydrolysis of the GTP bound to eIF-2 and release of an eIF-2-GDP binary complex. In order for eIF-2 to recycle and catalyze another round of initiation, the GDP bound to eIF-2 must exchange with GTP by way of a reaction catalyzed by eIF2B. The chain is Eukaryotic translation initiation factor 2 subunit 1 (eif2s1) from Dictyostelium discoideum (Social amoeba).